Consider the following 270-residue polypeptide: Phosphatidate cytidylyltransferase (270 aa).

8 consecutive transmembrane segments (helical) span residues 17–37 (FVVL…AILI), 55–75 (FFYV…FEEP), 81–101 (ILFI…SQVF), 104–124 (VAAF…FLPI), 129–149 (GAAN…FAYF), 170–190 (EGVI…RLVV), 193–213 (LLSV…TVAI), and 248–268 (IDGL…LEGV).

This sequence belongs to the CDS family.

It is found in the cell membrane. It catalyses the reaction a 1,2-diacyl-sn-glycero-3-phosphate + CTP + H(+) = a CDP-1,2-diacyl-sn-glycerol + diphosphate. It participates in phospholipid metabolism; CDP-diacylglycerol biosynthesis; CDP-diacylglycerol from sn-glycerol 3-phosphate: step 3/3. The protein is Phosphatidate cytidylyltransferase (cdsA) of Thermotoga maritima (strain ATCC 43589 / DSM 3109 / JCM 10099 / NBRC 100826 / MSB8).